The sequence spans 430 residues: Tol-Pal system protein TolB (430 aa).

The signal sequence occupies residues 1-21 (MKQALRVAFGFLILWASVLHA).

This sequence belongs to the TolB family. In terms of assembly, the Tol-Pal system is composed of five core proteins: the inner membrane proteins TolA, TolQ and TolR, the periplasmic protein TolB and the outer membrane protein Pal. They form a network linking the inner and outer membranes and the peptidoglycan layer.

The protein resides in the periplasm. Part of the Tol-Pal system, which plays a role in outer membrane invagination during cell division and is important for maintaining outer membrane integrity. TolB occupies a key intermediary position in the Tol-Pal system because it communicates directly with both membrane-embedded components, Pal in the outer membrane and TolA in the inner membrane. This is Tol-Pal system protein TolB from Escherichia coli O8 (strain IAI1).